The primary structure comprises 425 residues: Glutamyl-tRNA reductase (425 aa).

Substrate is bound by residues 49-52 (TCNR), S107, 112-114 (EPQ), and Q118. The active-site Nucleophile is the C50. 187–192 (GAGETI) is an NADP(+) binding site.

This sequence belongs to the glutamyl-tRNA reductase family. As to quaternary structure, homodimer.

The catalysed reaction is (S)-4-amino-5-oxopentanoate + tRNA(Glu) + NADP(+) = L-glutamyl-tRNA(Glu) + NADPH + H(+). It functions in the pathway porphyrin-containing compound metabolism; protoporphyrin-IX biosynthesis; 5-aminolevulinate from L-glutamyl-tRNA(Glu): step 1/2. Functionally, catalyzes the NADPH-dependent reduction of glutamyl-tRNA(Glu) to glutamate 1-semialdehyde (GSA). The protein is Glutamyl-tRNA reductase of Pseudomonas syringae pv. tomato (strain ATCC BAA-871 / DC3000).